We begin with the raw amino-acid sequence, 311 residues long: Acetyl-coenzyme A carboxylase carboxyl transferase subunit beta (311 aa).

The 270-residue stretch at 27-296 (LWTKCGHCSA…AEAADAPEAG (270 aa)) folds into the CoA carboxyltransferase N-terminal domain. C31, C34, C50, and C53 together coordinate Zn(2+). Residues 31 to 53 (CGHCSAVLYRPELERNQEVCPKC) form a C4-type zinc finger. A compositionally biased stretch (low complexity) spans 286–299 (AAEAADAPEAGEQP). The segment at 286-311 (AAEAADAPEAGEQPSEATDPVGEHWD) is disordered.

This sequence belongs to the AccD/PCCB family. Acetyl-CoA carboxylase is a heterohexamer composed of biotin carboxyl carrier protein (AccB), biotin carboxylase (AccC) and two subunits each of ACCase subunit alpha (AccA) and ACCase subunit beta (AccD). It depends on Zn(2+) as a cofactor.

The protein localises to the cytoplasm. It catalyses the reaction N(6)-carboxybiotinyl-L-lysyl-[protein] + acetyl-CoA = N(6)-biotinyl-L-lysyl-[protein] + malonyl-CoA. Its pathway is lipid metabolism; malonyl-CoA biosynthesis; malonyl-CoA from acetyl-CoA: step 1/1. In terms of biological role, component of the acetyl coenzyme A carboxylase (ACC) complex. Biotin carboxylase (BC) catalyzes the carboxylation of biotin on its carrier protein (BCCP) and then the CO(2) group is transferred by the transcarboxylase to acetyl-CoA to form malonyl-CoA. The protein is Acetyl-coenzyme A carboxylase carboxyl transferase subunit beta of Alkalilimnicola ehrlichii (strain ATCC BAA-1101 / DSM 17681 / MLHE-1).